We begin with the raw amino-acid sequence, 438 residues long: Putative metabolite transport protein HI_0281 (438 aa).

Residues 1–17 (MSTQLRNNPMKVALASM) lie on the Cytoplasmic side of the membrane. The helical transmembrane segment at 18 to 38 (VGTAIEFFDYYIYAAAAVLVF) threads the bilayer. At 39-52 (NTQFFHSDDPLSND) the chain is on the periplasmic side. A helical transmembrane segment spans residues 53 to 73 (LLSLSTLALAFFARPIGSALF). Residues 74–85 (GHFGDKIGRKKT) lie on the Cytoplasmic side of the membrane. Residues 86 to 106 (LVASLVLMGGSTVVIGLLPNY) form a helical membrane-spanning segment. Topologically, residues 107-115 (AQIGIWAPI) are periplasmic. The chain crosses the membrane as a helical span at residues 116–136 (LLCVCRVGQGIGLGGEWGGAA). Over 137-156 (LVATENAPEGKRAWYGTFPQ) the chain is Cytoplasmic. A helical transmembrane segment spans residues 157–177 (LGAPIGLFVANGTFFLVSYLL). At 178–181 (GHNA) the chain is on the periplasmic side. A helical transmembrane segment spans residues 182–202 (LVEWAWRIPFVSSILLVAVGL). Over 203-239 (YVRLTLHESHVFVEAEQKGKKLNAPVSVVFTKHLKPM) the chain is Cytoplasmic. The helical transmembrane segment at 240–260 (VIGTFIMVATYSLFYIMTAFA) threads the bilayer. The Periplasmic portion of the chain corresponds to 261-286 (QAYSRTAPKLSEAGYALGLGIPANTF). A helical membrane pass occupies residues 287-307 (TGLLLISAIVFGIFISISGFY). Residues 308–314 (ADKIGRR) are Cytoplasmic-facing. The helical transmembrane segment at 315–336 (KWLIWVTIAIGVLGLAMPLFLE) threads the bilayer. Topologically, residues 337–342 (NGTPVS) are periplasmic. Residues 343-363 (VFAFLVIGMAIMGMTFGPMAA) form a helical membrane-spanning segment. At 364-377 (LLPELFPTEVRYSG) the chain is on the cytoplasmic side. The chain crosses the membrane as a helical span at residues 378-398 (ASLAYNLASIIGATIAAMISL). Topologically, residues 399–405 (KINASFG) are periplasmic. The chain crosses the membrane as a helical span at residues 406 to 426 (VMGVGIYLAINALMTFLALLA). Residues 427 to 438 (SKETKNVDLTEI) lie on the Cytoplasmic side of the membrane.

It belongs to the major facilitator superfamily. Sugar transporter (TC 2.A.1.1) family.

It is found in the cell inner membrane. This Haemophilus influenzae (strain ATCC 51907 / DSM 11121 / KW20 / Rd) protein is Putative metabolite transport protein HI_0281.